A 216-amino-acid chain; its full sequence is MNGEEVKTSQPQKKLQNPTPRLNERILSSLSKRSVAAHPWHDLEIGPGAPVIFNVVIEISKGSKVKYELDKKTGLIKVDRILYSSVVYPHNYGFVPRTLCEDNDPIDVLVIMQEPVLPGCFLRARAIGLMPMIDQGEKDDKIIAVCVDDPEYKHITNINELPPHRLSEIRRFFEDYKKNENKEVAVNDFLQPGPAIEAIQYSMDLYAEYILHTLRR.

The disordered stretch occupies residues 1 to 20 (MNGEEVKTSQPQKKLQNPTP). Residues 8-20 (TSQPQKKLQNPTP) are compositionally biased toward polar residues. Substrate-binding residues include Lys66 and Arg80. Tyr88 acts as the Proton donor in catalysis. Residue Tyr92 coordinates substrate. Residues Asp102, Asp107, and Asp139 each coordinate Mg(2+). Residue Tyr176 coordinates substrate.

The protein belongs to the PPase family. Mg(2+) serves as cofactor.

The protein resides in the cytoplasm. It catalyses the reaction diphosphate + H2O = 2 phosphate + H(+). In Arabidopsis thaliana (Mouse-ear cress), this protein is Soluble inorganic pyrophosphatase 5.